We begin with the raw amino-acid sequence, 137 residues long: MSAERTLILVKPDGVSRGLVGEVVGRIERKGLKIVALELRTLERSVAETHYGEHASKPFFGELVEFITSGPLVALVAEGPRAVEALRGLIGATDPVKAAPGSLRGDFALEIGQNLIHGSDSPESAKREIDLFFPGLS.

ATP is bound by residues K11, F59, R87, T93, R104, and N114. H117 acts as the Pros-phosphohistidine intermediate in catalysis.

This sequence belongs to the NDK family. In terms of assembly, homotetramer. It depends on Mg(2+) as a cofactor.

Its subcellular location is the cytoplasm. The catalysed reaction is a 2'-deoxyribonucleoside 5'-diphosphate + ATP = a 2'-deoxyribonucleoside 5'-triphosphate + ADP. It carries out the reaction a ribonucleoside 5'-diphosphate + ATP = a ribonucleoside 5'-triphosphate + ADP. In terms of biological role, major role in the synthesis of nucleoside triphosphates other than ATP. The ATP gamma phosphate is transferred to the NDP beta phosphate via a ping-pong mechanism, using a phosphorylated active-site intermediate. The sequence is that of Nucleoside diphosphate kinase from Parafrankia sp. (strain EAN1pec).